The primary structure comprises 297 residues: Putative thiosulfate sulfurtransferase SseA (297 aa).

Rhodanese domains are found at residues 31-138 (GAPG…ETTL) and 168-286 (ILDA…VPIV). Residue Cys-245 is the Cysteine persulfide intermediate of the active site. Arg-250 contributes to the substrate binding site.

The catalysed reaction is thiosulfate + hydrogen cyanide = thiocyanate + sulfite + 2 H(+). The chain is Putative thiosulfate sulfurtransferase SseA (sseA) from Mycobacterium bovis (strain ATCC BAA-935 / AF2122/97).